The chain runs to 748 residues: Catalase-peroxidase (748 aa).

Polar residues predominate over residues 1–16; that stretch reads MSSDTSASRPPQPDTR. A disordered region spans residues 1 to 43; that stretch reads MSSDTSASRPPQPDTRTASKSESENPAIPSPHPKSNAPLTNRD. A cross-link (tryptophyl-tyrosyl-methioninium (Trp-Tyr) (with M-264)) is located at residues 113–238; sequence WHAAGTYRIH…YGATTMGLIY (126 aa). The active-site Proton acceptor is the His114. Residues 238–264 constitute a cross-link (tryptophyl-tyrosyl-methioninium (Tyr-Met) (with W-113)); sequence YVNPEGPEGKPDPIAAAIDIRETFGRM. His279 is a heme b binding site.

It belongs to the peroxidase family. Peroxidase/catalase subfamily. Homodimer or homotetramer. It depends on heme b as a cofactor. Formation of the three residue Trp-Tyr-Met cross-link is important for the catalase, but not the peroxidase activity of the enzyme.

The enzyme catalyses H2O2 + AH2 = A + 2 H2O. It carries out the reaction 2 H2O2 = O2 + 2 H2O. Functionally, bifunctional enzyme with both catalase and broad-spectrum peroxidase activity. This Mycolicibacterium paratuberculosis (strain ATCC BAA-968 / K-10) (Mycobacterium paratuberculosis) protein is Catalase-peroxidase.